The chain runs to 236 residues: Orotidine 5'-phosphate decarboxylase (236 aa).

Substrate contacts are provided by residues Asp-16, Lys-38, 65 to 74 (DLKYHDIPNT), Thr-124, Arg-185, Gln-194, Gly-214, and Arg-215. Lys-67 acts as the Proton donor in catalysis.

The protein belongs to the OMP decarboxylase family. Type 1 subfamily. In terms of assembly, homodimer.

The enzyme catalyses orotidine 5'-phosphate + H(+) = UMP + CO2. It functions in the pathway pyrimidine metabolism; UMP biosynthesis via de novo pathway; UMP from orotate: step 2/2. Catalyzes the decarboxylation of orotidine 5'-monophosphate (OMP) to uridine 5'-monophosphate (UMP). In Hydrogenovibrio crunogenus (strain DSM 25203 / XCL-2) (Thiomicrospira crunogena), this protein is Orotidine 5'-phosphate decarboxylase.